The sequence spans 63 residues: Large ribosomal subunit protein uL29 (63 aa).

It belongs to the universal ribosomal protein uL29 family.

This is Large ribosomal subunit protein uL29 from Shewanella pealeana (strain ATCC 700345 / ANG-SQ1).